The sequence spans 1338 residues: Centrosomal P4.1-associated protein (1338 aa).

Disordered regions lie at residues 78–99 (QKLE…HTGF) and 190–211 (GLSL…TTTG). Residues Ser-260 and Ser-317 each carry the phosphoserine modification. Positions 320 to 395 (VANIEERPIK…FTNAKSKFQK (76 aa)) are alpha/beta-tubulin binding. 3 disordered regions span residues 387 to 415 (TNAK…PLFK), 437 to 480 (PILK…QTGK), and 522 to 552 (QGKD…ESES). A compositionally biased stretch (polar residues) spans 401–410 (LVTNQSTSED). Ser-541 is subject to Phosphoserine. Positions 542 to 551 (PIRETMKESE) are enriched in basic and acidic residues. Ser-590 and Ser-596 each carry phosphoserine; by PLK2. 3 disordered regions span residues 612–790 (HRMS…LSMS), 846–903 (VKRG…DNAR), and 1088–1158 (TQVE…HPDG). Basic and acidic residues predominate over residues 636-651 (NRSEDLDHTAREKESE). A compositionally biased stretch (polar residues) spans 680-690 (QKSTSENQTEW). Over residues 718-765 (STEDRERGISSREDSPQVCDDKGPFKDTRTQEDKRRDVDLDLSDKDYS) the composition is skewed to basic and acidic residues. Ser-760 carries the post-translational modification Phosphoserine. Low complexity predominate over residues 781-790 (PSRSSSLSMS). Residues 896–1338 (QPPGDNARSQ…EGNVLMDTEL (443 aa)) form an interaction with STIL region.

It belongs to the TCP10 family. As to quaternary structure, forms homodimers. Associates with microtubules plus ends; binds to beta-tubulin subunits exposed on microtubule outer surface at its distal tip; also associates with microtubule lattice. Associated with the gamma-tubulin complex. Interacts with the head domain of EPB41. Interacts with LYST. Interacts with CEP152 (via C-terminus). Interacts with STIL. Forms a complex with STIL and SASS6. Post-translationally, phosphorylation at Ser-590 and Ser-596 by PLK2 is required for procentriole formation and centriole elongation. Phosphorylation by PLK2 oscillates during the cell cycle: it increases at G1/S transition and decreases during the exit from mitosis. Phosphorylation at Ser-596 is also mediated by PLK4 but is not a critical step in PLK4 function in procentriole assembly.

It localises to the cytoplasm. The protein localises to the cytoskeleton. It is found in the microtubule organizing center. Its subcellular location is the centrosome. The protein resides in the centriole. Functionally, plays an important role in cell division and centrosome function by participating in centriole duplication. Inhibits microtubule nucleation from the centrosome. Involved in the regulation of slow processive growth of centriolar microtubules. Acts as microtubule plus-end tracking protein that stabilizes centriolar microtubules and inhibits microtubule polymerization and extension from the distal ends of centrioles. Required for centriole elongation and for STIL-mediated centriole amplification. Required for the recruitment of CEP295 to the proximal end of new-born centrioles at the centriolar microtubule wall during early S phase in a PLK4-dependent manner. May be involved in the control of centriolar-microtubule growth by acting as a regulator of tubulin release. This is Centrosomal P4.1-associated protein (CPAP) from Pan troglodytes (Chimpanzee).